The sequence spans 463 residues: Hydrolase pyiE (463 aa).

Serine 252 serves as the catalytic Nucleophile. Positions 350–373 are disordered; it reads KSDGSRANGKKSHSPTDGGGVESD.

It belongs to the AB hydrolase superfamily. FUS2 hydrolase family. As to quaternary structure, homodimer.

It participates in mycotoxin biosynthesis. In terms of biological role, hydrolyase; part of the gene cluster that mediates the biosynthesis of the mycotoxin pyrichalasin H, a tyrosine-derived cytochalasan that inhibits the growth of rice seedlings, but also inhibits lymphocyte capping and actin polymerization and alters cell morphology. Pyrichalasin H is indicated as the responsible agent for the genus-specific pathogenicity of M.grisea toward crabgrass. The first step in the pathway is catalyzed by the O-methyltransferase pyiA which methylates free tyrosine to generate the precursor O-methyltyrosine. The hybrid PKS-NRPS pyiS, assisted by the enoyl reductase pyiC, are responsible for fusion of the O-methyltyrosine precursor and the polyketide backbone. The polyketide synthase module (PKS) of pyiS is responsible for the synthesis of the polyketide backbone and the downstream nonribosomal peptide synthetase (NRPS) amidates the carboxyl end of the polyketide with the O-methyltyrosine precursor. As the NRPS A-domain demonstrates substrate tolerance, pyiS can also use phenylalanine, tyrosine and even para-chlorophenylalanine as amino acid precursor, which leads to the production of novel cytochalasans, including halogenated cytochalasans. Because pyiS lacks a designated enoylreductase (ER) domain, the required activity is provided the enoyl reductase pyiC. Reduction by the hydrolyase pyiE leads to 1,5-dihydropyrrolone, which is substrate for dehydration and intra-molecular Diels-Alder cyclization by the Diels-Alderase pyiF to yield the required isoindolone-fused macrocycle. The tailoring cytochrome P450 monooxygenases piyD and piyG catalyze the hydroxylation at C-18 and C-7, respectivily, whereas the short-chain dehydrogenase/reductase pyiH reduces the carbonyl at C-21 in preparation for the transfer of an acetyl group by the acetyltransferase pyiB. These 3 reactions whose order is not clear yet, lead to the production of O-methylpyrichalasin J, a deacetylated pyrichalasin H. Finally, pyiB to converts O-methylpyrichalasin J into the final product pyrichalasin H via acetylation of C-21. This chain is Hydrolase pyiE, found in Pyricularia grisea (Crabgrass-specific blast fungus).